A 431-amino-acid polypeptide reads, in one-letter code: 23S rRNA (uracil(1939)-C(5))-methyltransferase RlmD (431 aa).

One can recognise a TRAM domain in the interval 10 to 68 (RVTTRQIITVKVNDLDSFGQGVARHNGKALFIPGLLPEESAEVIITEDKKQFARARVSR). [4Fe-4S] cluster-binding residues include Cys-81, Cys-87, Cys-90, and Cys-161. Residues Gln-264, Phe-293, Asn-298, Glu-314, Asn-341, and Asp-362 each contribute to the S-adenosyl-L-methionine site. Cys-388 (nucleophile) is an active-site residue.

The protein belongs to the class I-like SAM-binding methyltransferase superfamily. RNA M5U methyltransferase family. RlmD subfamily.

It carries out the reaction uridine(1939) in 23S rRNA + S-adenosyl-L-methionine = 5-methyluridine(1939) in 23S rRNA + S-adenosyl-L-homocysteine + H(+). Functionally, catalyzes the formation of 5-methyl-uridine at position 1939 (m5U1939) in 23S rRNA. The chain is 23S rRNA (uracil(1939)-C(5))-methyltransferase RlmD from Salmonella typhimurium (strain LT2 / SGSC1412 / ATCC 700720).